The chain runs to 261 residues: Kallikrein 1-related peptidase b26 (261 aa).

The N-terminal stretch at methionine 1–alanine 18 is a signal peptide. Residues proline 19–arginine 24 constitute a propeptide, activation peptide. Residues valine 25 to methionine 258 form the Peptidase S1 domain. Cystine bridges form between cysteine 31–cysteine 173, cysteine 50–cysteine 66, cysteine 152–cysteine 219, cysteine 184–cysteine 198, and cysteine 209–cysteine 234. Histidine 65 functions as the Charge relay system in the catalytic mechanism. An N-linked (GlcNAc...) asparagine glycan is attached at asparagine 102. Residue aspartate 120 is the Charge relay system of the active site. Serine 213 functions as the Charge relay system in the catalytic mechanism.

This sequence belongs to the peptidase S1 family. Kallikrein subfamily.

It carries out the reaction Preferential cleavage of Arg-|-Xaa bonds in small molecule substrates. Highly selective action to release kallidin (lysyl-bradykinin) from kininogen involves hydrolysis of Met-|-Xaa or Leu-|-Xaa.. Glandular kallikreins cleave Met-Lys and Arg-Ser bonds in kininogen to release Lys-bradykinin. Its function is as follows. Prorenin-converting enzyme cleaves mouse REN-2 prorenin at a dibasic site to yield mature renin. The protein is Kallikrein 1-related peptidase b26 (Klk1b26) of Mus musculus (Mouse).